Reading from the N-terminus, the 64-residue chain is Large ribosomal subunit protein bL35 (64 aa).

The protein belongs to the bacterial ribosomal protein bL35 family.

This chain is Large ribosomal subunit protein bL35, found in Pseudomonas putida (strain W619).